We begin with the raw amino-acid sequence, 60 residues long: Large ribosomal subunit protein bL32 (60 aa).

A compositionally biased stretch (basic residues) spans Met-1 to Leu-22. A disordered region spans residues Met-1–Tyr-27.

This sequence belongs to the bacterial ribosomal protein bL32 family.

The chain is Large ribosomal subunit protein bL32 from Rhodospirillum centenum (strain ATCC 51521 / SW).